Consider the following 510-residue polypeptide: Ribonuclease Y (510 aa).

The helical transmembrane segment at 2–22 (IYIIFSSIFAGFILGFLVRVF) threads the bilayer. Positions 198–258 (TVASVELPND…IRKELAKRTL (61 aa)) constitute a KH domain. The region spanning 324–419 (VLSHSKETAI…VQIADAISAS (96 aa)) is the HD domain.

Belongs to the RNase Y family.

Its subcellular location is the cell membrane. Its function is as follows. Endoribonuclease that initiates mRNA decay. This Borrelia garinii subsp. bavariensis (strain ATCC BAA-2496 / DSM 23469 / PBi) (Borreliella bavariensis) protein is Ribonuclease Y.